A 110-amino-acid chain; its full sequence is Large ribosomal subunit protein uL24 (110 aa).

The protein belongs to the universal ribosomal protein uL24 family. As to quaternary structure, part of the 50S ribosomal subunit.

Functionally, one of two assembly initiator proteins, it binds directly to the 5'-end of the 23S rRNA, where it nucleates assembly of the 50S subunit. Its function is as follows. One of the proteins that surrounds the polypeptide exit tunnel on the outside of the subunit. The protein is Large ribosomal subunit protein uL24 of Thermus thermophilus (strain ATCC BAA-163 / DSM 7039 / HB27).